A 730-amino-acid chain; its full sequence is Elongation factor 2 (730 aa).

The tr-type G domain occupies 18–238 (DQIRNFGVIA…YSEGKVDELV (221 aa)). Residues 27-34 (AHVDHGKT), 93-97 (DTPGH), and 147-150 (NKVD) contribute to the GTP site. His595 is modified (diphthamide). Residues 711 to 730 (RKRKGLAPDPPTVSEFIDRE) form a disordered region.

It belongs to the TRAFAC class translation factor GTPase superfamily. Classic translation factor GTPase family. EF-G/EF-2 subfamily.

It localises to the cytoplasm. Catalyzes the GTP-dependent ribosomal translocation step during translation elongation. During this step, the ribosome changes from the pre-translocational (PRE) to the post-translocational (POST) state as the newly formed A-site-bound peptidyl-tRNA and P-site-bound deacylated tRNA move to the P and E sites, respectively. Catalyzes the coordinated movement of the two tRNA molecules, the mRNA and conformational changes in the ribosome. This Cenarchaeum symbiosum (strain A) protein is Elongation factor 2.